The following is a 120-amino-acid chain: Glycine cleavage system H protein (120 aa).

The Lipoyl-binding domain maps to 17–99 (VATVGITEHA…QGAAWFFKLK (83 aa)). N6-lipoyllysine is present on Lys58.

The protein belongs to the GcvH family. As to quaternary structure, the glycine cleavage system is composed of four proteins: P, T, L and H. Requires (R)-lipoate as cofactor.

Functionally, the glycine cleavage system catalyzes the degradation of glycine. The H protein shuttles the methylamine group of glycine from the P protein to the T protein. In Sinorhizobium medicae (strain WSM419) (Ensifer medicae), this protein is Glycine cleavage system H protein.